A 330-amino-acid chain; its full sequence is Olfactory receptor 5T9 (330 aa).

At 1–37 (MSIHSPGYTVRRIPVNNVTDTTMFILTGFTDDADLQV) the chain is on the extracellular side. N-linked (GlcNAc...) asparagine glycosylation is present at N17. The helical transmembrane segment at 38–58 (LLFLLFFVIYLFTLIGNLGLV) threads the bilayer. At 59-66 (LLVIGDSR) the chain is on the cytoplasmic side. Residues 67 to 87 (LHNPMYYFLSVLSFLDACYST) form a helical membrane-spanning segment. Over 88–111 (VVTPKMLVNFISNDKSISYPGCVT) the chain is Extracellular. C109 and C201 form a disulfide bridge. A helical transmembrane segment spans residues 112–132 (EMFLFVTFGTTECFLLAAMAY). Over 133-145 (DRFVAIYNPLLYA) the chain is Cytoplasmic. The chain crosses the membrane as a helical span at residues 146-166 (VKMSPRVYIPLIIACYSGGIM). The Extracellular segment spans residues 167 to 208 (HATIHTVATFSLSFCASNEIRHVFCDIPPLLAISCSNTNINQ). A helical transmembrane segment spans residues 209-229 (LLLFYCVGSIEIITILIVLVS). Over 230–249 (YSFILFAILKMNSAEGRRKI) the chain is Cytoplasmic. Residues 250–270 (FSTCGSHLTGVSIYHGTILFM) form a helical membrane-spanning segment. The Extracellular segment spans residues 271–283 (YVRPSSNYALEHD). Residues 284–304 (MIVSTFYTIVIPMLNPIIYSL) form a helical membrane-spanning segment. Over 305–330 (RNKDVKEAMKKIFERNFFMNKVHFKL) the chain is Cytoplasmic.

It belongs to the G-protein coupled receptor 1 family.

Its subcellular location is the cell membrane. In terms of biological role, potential odorant receptor. The sequence is that of Olfactory receptor 5T9 from Mus musculus (Mouse).